We begin with the raw amino-acid sequence, 102 residues long: UPF0473 protein SERP1179 (102 aa).

This sequence belongs to the UPF0473 family.

This chain is UPF0473 protein SERP1179, found in Staphylococcus epidermidis (strain ATCC 35984 / DSM 28319 / BCRC 17069 / CCUG 31568 / BM 3577 / RP62A).